Consider the following 302-residue polypeptide: Tritrans,polycis-undecaprenyl-diphosphate synthase (geranylgeranyl-diphosphate specific) (302 aa).

D33 is a catalytic residue. D33 is a binding site for Mg(2+). Residues 34–37 and 78–80 contribute to the substrate site; these read GNRR and STE. The Proton acceptor role is filled by N81. Residues F82, R84, R203, and 209–211 contribute to the substrate site; that span reads RTS.

The protein belongs to the UPP synthase family. As to quaternary structure, homodimer. The cofactor is Mg(2+).

The enzyme catalyses geranylgeranyl diphosphate + 7 isopentenyl diphosphate = tri-trans,hepta-cis-undecaprenyl diphosphate + 7 diphosphate. Its function is as follows. Catalyzes the sequential condensation of isopentenyl diphosphate (IPP) with geranylgeranyl diphosphate (GGPP) to yield (2Z,6Z,10Z,14Z,18Z,22Z,26Z,30E,34E,38E)-undecaprenyl diphosphate (tritrans,heptacis-UPP). It is probably the precursor of glycosyl carrier lipids. The polypeptide is Tritrans,polycis-undecaprenyl-diphosphate synthase (geranylgeranyl-diphosphate specific) (Halobacterium salinarum (strain ATCC 700922 / JCM 11081 / NRC-1) (Halobacterium halobium)).